We begin with the raw amino-acid sequence, 149 residues long: MADNARAARMAKRIQTIVASAIERDIKDRRLEFVTITDVTMTGDLHDAKVFYTVRGASIEEEPDLEAAAEALHRARGQLRKIVGQQLGVRFTPTLTYSIDTVPEASAHMEALLDRARKRDEELAKLREGAVPAGDADPYKTSSKSESEE.

Residues 124 to 149 (AKLREGAVPAGDADPYKTSSKSESEE) are disordered.

Belongs to the RbfA family. As to quaternary structure, monomer. Binds 30S ribosomal subunits, but not 50S ribosomal subunits or 70S ribosomes.

The protein resides in the cytoplasm. In terms of biological role, one of several proteins that assist in the late maturation steps of the functional core of the 30S ribosomal subunit. Associates with free 30S ribosomal subunits (but not with 30S subunits that are part of 70S ribosomes or polysomes). Required for efficient processing of 16S rRNA. May interact with the 5'-terminal helix region of 16S rRNA. This chain is Ribosome-binding factor A, found in Corynebacterium glutamicum (strain R).